A 113-amino-acid chain; its full sequence is uncharacterized protein (113 aa).

The signal sequence occupies residues M1–S22. Residue N47 is glycosylated (N-linked (GlcNAc...) asparagine).

Its subcellular location is the secreted. This is an uncharacterized protein from Caenorhabditis elegans.